The chain runs to 93 residues: Putative pterin-4-alpha-carbinolamine dehydratase (93 aa).

It belongs to the pterin-4-alpha-carbinolamine dehydratase family.

The enzyme catalyses (4aS,6R)-4a-hydroxy-L-erythro-5,6,7,8-tetrahydrobiopterin = (6R)-L-erythro-6,7-dihydrobiopterin + H2O. The polypeptide is Putative pterin-4-alpha-carbinolamine dehydratase (Thermomicrobium roseum (strain ATCC 27502 / DSM 5159 / P-2)).